A 238-amino-acid polypeptide reads, in one-letter code: Green fluorescent protein (238 aa).

The 5-imidazolinone (Ser-Gly) cross-link spans 65-67 (SYG). Position 66 is a (Z)-2,3-didehydrotyrosine (Tyr-66).

The protein belongs to the GFP family. Monomer. Post-translationally, contains a chromophore consisting of modified amino acid residues. The chromophore is formed by autocatalytic backbone condensation between Ser-65 and Gly-67, and oxidation of Tyr-66 to didehydrotyrosine. Maturation of the chromophore requires nothing other than molecular oxygen. Photocytes.

Energy-transfer acceptor. Its role is to transduce the blue chemiluminescence of the protein aequorin into green fluorescent light by energy transfer. Fluoresces in vivo upon receiving energy from the Ca(2+)-activated photoprotein aequorin. This Aequorea victoria (Water jellyfish) protein is Green fluorescent protein (GFP).